The primary structure comprises 488 residues: Inosine-5'-monophosphate dehydrogenase (488 aa).

CBS domains follow at residues valine 95–isoleucine 153 and methionine 157–glutamate 216. Residues aspartate 250 and glycine 300–glycine 302 contribute to the NAD(+) site. K(+) contacts are provided by glycine 302 and glycine 304. Serine 305 is an IMP binding site. Residue cysteine 307 coordinates K(+). Cysteine 307 acts as the Thioimidate intermediate in catalysis. Residues aspartate 340 to glycine 342, glycine 363 to serine 364, and tyrosine 387 to glycine 391 contribute to the IMP site. Arginine 403 serves as the catalytic Proton acceptor. Glutamate 417 is a binding site for IMP. Residues alanine 467–phenylalanine 488 are disordered. K(+)-binding residues include glutamate 471, serine 472, and histidine 473. Positions histidine 475–phenylalanine 488 are enriched in polar residues.

Belongs to the IMPDH/GMPR family. In terms of assembly, homotetramer. K(+) serves as cofactor.

The enzyme catalyses IMP + NAD(+) + H2O = XMP + NADH + H(+). It functions in the pathway purine metabolism; XMP biosynthesis via de novo pathway; XMP from IMP: step 1/1. Its activity is regulated as follows. Mycophenolic acid (MPA) is a non-competitive inhibitor that prevents formation of the closed enzyme conformation by binding to the same site as the amobile flap. In contrast, mizoribine monophosphate (MZP) is a competitive inhibitor that induces the closed conformation. MPA is a potent inhibitor of mammalian IMPDHs but a poor inhibitor of the bacterial enzymes. MZP is a more potent inhibitor of bacterial IMPDH. In terms of biological role, catalyzes the conversion of inosine 5'-phosphate (IMP) to xanthosine 5'-phosphate (XMP), the first committed and rate-limiting step in the de novo synthesis of guanine nucleotides, and therefore plays an important role in the regulation of cell growth. This Staphylococcus epidermidis (strain ATCC 35984 / DSM 28319 / BCRC 17069 / CCUG 31568 / BM 3577 / RP62A) protein is Inosine-5'-monophosphate dehydrogenase.